The chain runs to 487 residues: UDP-N-acetylmuramate--L-alanine ligase (487 aa).

Residue Gly126–Thr132 coordinates ATP.

This sequence belongs to the MurCDEF family.

Its subcellular location is the cytoplasm. The enzyme catalyses UDP-N-acetyl-alpha-D-muramate + L-alanine + ATP = UDP-N-acetyl-alpha-D-muramoyl-L-alanine + ADP + phosphate + H(+). The protein operates within cell wall biogenesis; peptidoglycan biosynthesis. Its function is as follows. Cell wall formation. This is UDP-N-acetylmuramate--L-alanine ligase from Proteus mirabilis (strain HI4320).